The chain runs to 209 residues: Probable phosphatidylglycerophosphatase, mitochondrial (209 aa).

Residues 57-61 (DKDNC) carry the Phosphoryl acceptor motif.

The protein belongs to the GEP4 family.

The protein localises to the mitochondrion inner membrane. It catalyses the reaction a 1,2-diacyl-sn-glycero-3-phospho-(1'-sn-glycero-3'-phosphate) + H2O = a 1,2-diacyl-sn-glycero-3-phospho-(1'-sn-glycerol) + phosphate. It functions in the pathway phospholipid metabolism; phosphatidylglycerol biosynthesis; phosphatidylglycerol from CDP-diacylglycerol: step 2/2. In terms of biological role, phosphatidylglycerophosphatase involved in the biosynthesis of cardiolipin (CL), a unique dimeric phosphoglycerolipid predominantly present in mitochondrial membranes and which has important functions for cellular energy metabolism, mitochondrial dynamics and the initiation of apoptotic pathways. In Schizosaccharomyces pombe (strain 972 / ATCC 24843) (Fission yeast), this protein is Probable phosphatidylglycerophosphatase, mitochondrial (gep4).